Here is a 223-residue protein sequence, read N- to C-terminus: Putative oxidoreductase MT1904 (223 aa).

4-28 (LVTGGDTDLGRTMAEGFRNDGHKVT) provides a ligand contact to NADP(+). Ser-128 is a substrate binding site.

This sequence belongs to the short-chain dehydrogenases/reductases (SDR) family.

The protein is Putative oxidoreductase MT1904 of Mycobacterium tuberculosis (strain CDC 1551 / Oshkosh).